The primary structure comprises 394 residues: [Pyruvate dehydrogenase (acetyl-transferring)] kinase 1, mitochondrial (394 aa).

The transit peptide at M1–R20 directs the protein to the mitochondrion. Residues A126 to S386 enclose the Histidine kinase domain. Residue H148 is modified to Phosphohistidine; by autocatalysis. ATP is bound by residues E267–E274, D304, S323–T324, and G347–L352.

The protein belongs to the PDK/BCKDK protein kinase family. Interacts with PKP2.

It localises to the mitochondrion matrix. It carries out the reaction L-seryl-[pyruvate dehydrogenase E1 alpha subunit] + ATP = O-phospho-L-seryl-[pyruvate dehydrogenase E1 alpha subunit] + ADP + H(+). Inhibits the mitochondrial pyruvate dehydrogenase complex by phosphorylation of the E1 alpha subunit (PDA1), thus contributing to the regulation of glucose metabolism. Also involved in telomere maintenance. This chain is [Pyruvate dehydrogenase (acetyl-transferring)] kinase 1, mitochondrial, found in Saccharomyces cerevisiae (strain ATCC 204508 / S288c) (Baker's yeast).